Consider the following 223-residue polypeptide: 26S proteasome non-ATPase regulatory subunit 9 (223 aa).

A compositionally biased stretch (basic and acidic residues) spans 103 to 121 (RDKEKQARDMAEAHKEAMS). Positions 103 to 141 (RDKEKQARDMAEAHKEAMSRKLGQSESQGPPRAFAKVNS) are disordered. The PDZ domain occupies 108–195 (QARDMAEAHK…KPLNVTVIRR (88 aa)). The residue at position 129 (Ser-129) is a Phosphoserine.

Belongs to the proteasome subunit p27 family. In terms of assembly, interacts with PSMC3. Part of a transient complex (modulator) containing PSMD9, PSMC6 and PSMC3 formed during the assembly of the 26S proteasome. In terms of tissue distribution, expressed in all tissues tested, highly expressed in liver and kidney.

Functionally, acts as a chaperone during the assembly of the 26S proteasome, specifically of the base subcomplex of the PA700/19S regulatory complex (RC). During the base subcomplex assembly is part of an intermediate PSMD9:PSMC6:PSMC3 module, also known as modulator trimer complex; PSMD9 is released during the further base assembly process. The protein is 26S proteasome non-ATPase regulatory subunit 9 (PSMD9) of Homo sapiens (Human).